The chain runs to 96 residues: Co-chaperonin GroES (96 aa).

It belongs to the GroES chaperonin family. As to quaternary structure, heptamer of 7 subunits arranged in a ring. Interacts with the chaperonin GroEL.

The protein resides in the cytoplasm. Its function is as follows. Together with the chaperonin GroEL, plays an essential role in assisting protein folding. The GroEL-GroES system forms a nano-cage that allows encapsulation of the non-native substrate proteins and provides a physical environment optimized to promote and accelerate protein folding. GroES binds to the apical surface of the GroEL ring, thereby capping the opening of the GroEL channel. In Shewanella oneidensis (strain ATCC 700550 / JCM 31522 / CIP 106686 / LMG 19005 / NCIMB 14063 / MR-1), this protein is Co-chaperonin GroES.